The sequence spans 287 residues: tRNA uridine(34) hydroxylase (287 aa).

The 95-residue stretch at 132 to 226 (QGRPVVMLDT…YFEEVGGAHY (95 aa)) folds into the Rhodanese domain. The active-site Cysteine persulfide intermediate is C186.

Belongs to the TrhO family.

It catalyses the reaction uridine(34) in tRNA + AH2 + O2 = 5-hydroxyuridine(34) in tRNA + A + H2O. Catalyzes oxygen-dependent 5-hydroxyuridine (ho5U) modification at position 34 in tRNAs. This Paraburkholderia phytofirmans (strain DSM 17436 / LMG 22146 / PsJN) (Burkholderia phytofirmans) protein is tRNA uridine(34) hydroxylase.